The sequence spans 699 residues: D-(-)-3-hydroxybutyrate oligomer hydrolase (699 aa).

A signal peptide spans 1 to 33 (MTAIRGGSRRAPGLALALLGGVLLGACHGDENA). The active-site Charge relay system is the Ser-311.

The protein belongs to the D-(-)-3-hydroxybutyrate oligomer hydrolase family.

The protein localises to the secreted. The catalysed reaction is (3R)-hydroxybutanoate dimer + H2O = 2 (R)-3-hydroxybutanoate + H(+). It participates in lipid metabolism; butanoate metabolism. Functionally, participates in the degradation of poly-3-hydroxybutyrate (PHB). It works downstream of poly(3-hydroxybutyrate) depolymerase, hydrolyzing D(-)-3-hydroxybutyrate oligomers of various length (3HB-oligomers) into 3HB-monomers. In Burkholderia mallei (strain NCTC 10247), this protein is D-(-)-3-hydroxybutyrate oligomer hydrolase.